Consider the following 242-residue polypeptide: 3-dehydroquinate dehydratase (242 aa).

Residues glutamate 39–arginine 41 and arginine 73 each bind 3-dehydroquinate. Histidine 135 (proton donor/acceptor) is an active-site residue. Lysine 162 (schiff-base intermediate with substrate) is an active-site residue. Residues arginine 203 and glutamine 228 each coordinate 3-dehydroquinate.

It belongs to the type-I 3-dehydroquinase family. Homodimer.

It catalyses the reaction 3-dehydroquinate = 3-dehydroshikimate + H2O. It functions in the pathway metabolic intermediate biosynthesis; chorismate biosynthesis; chorismate from D-erythrose 4-phosphate and phosphoenolpyruvate: step 3/7. Its function is as follows. Involved in the third step of the chorismate pathway, which leads to the biosynthesis of aromatic amino acids. Catalyzes the cis-dehydration of 3-dehydroquinate (DHQ) and introduces the first double bond of the aromatic ring to yield 3-dehydroshikimate. The protein is 3-dehydroquinate dehydratase of Methanosarcina barkeri (strain Fusaro / DSM 804).